The chain runs to 538 residues: Probable inorganic phosphate transporter 1-4 (538 aa).

Residues 1–23 (MAGELKVLNALDSAKTQWYHFTA) lie on the Cytoplasmic side of the membrane. A helical membrane pass occupies residues 24 to 44 (IVIAGMGFFTDAYDLFSISLV). Topologically, residues 45–69 (TKLLGRIYYFNPASKSPGSLPPNVS) are extracellular. The chain crosses the membrane as a helical span at residues 70 to 90 (AAVNGVAFCGTLAGQLFFGWL). The Cytoplasmic portion of the chain corresponds to 91–98 (GDKMGRKK). Residues 99–119 (VYGMTLMLMVICCLASGLSFG) traverse the membrane as a helical segment. Over 120 to 123 (SSAK) the chain is Extracellular. Residues 124–144 (GVMATLCFFRFWLGFGIGGDY) traverse the membrane as a helical segment. Residues 145 to 163 (PLSATIMSEYANKRTRGAF) lie on the Cytoplasmic side of the membrane. The chain crosses the membrane as a helical span at residues 164–184 (IAAVFAMQGFGNLTGGIVAII). Residues 185 to 210 (VSAAFKARFDAPAYRDDRAGSTVPQA) are Extracellular-facing. Residues 211-231 (DYAWRIVLMFGAIPALLTYYW) form a helical membrane-spanning segment. The Cytoplasmic segment spans residues 232 to 294 (RMKMPETARY…RQFLRRHGRH (63 aa)). The helical transmembrane segment at 295–315 (LLGTTVCWFVLDIAFYSSNLF) threads the bilayer. The Extracellular segment spans residues 316–346 (QKDIYTAVQWLPKADTMSALEEMFKISRAQT). The helical transmembrane segment at 347–367 (LVALCGTIPGYWFTVFFIDII) threads the bilayer. Topologically, residues 368-369 (GR) are cytoplasmic. Residues 370 to 390 (FVIQLGGFFFMTAFMLGLAVP) traverse the membrane as a helical segment. At 391 to 396 (YHHWTT) the chain is on the extracellular side. Residues 397-417 (PGNHIGFVVMYAFTFFFANFG) traverse the membrane as a helical segment. Residues 418 to 440 (PNSTTFIVPAEIFPARLRSTCHG) lie on the Cytoplasmic side of the membrane. The chain crosses the membrane as a helical span at residues 441-461 (ISAAAGKAGAIVGSFGFLYAA). At 462–481 (QSTDASKTDAGYPPGIGVRN) the chain is on the extracellular side. The chain crosses the membrane as a helical span at residues 482-502 (SLFFLAGCNVIGFFFTFLVPE). Residues 503 to 538 (SKGKSLEELSGENEDDDDVPEAPSTADHRTAPAPPA) are Cytoplasmic-facing. The disordered stretch occupies residues 507–538 (SLEELSGENEDDDDVPEAPSTADHRTAPAPPA). Residues 511-522 (LSGENEDDDDVP) are compositionally biased toward acidic residues.

It belongs to the major facilitator superfamily. Phosphate:H(+) symporter (TC 2.A.1.9) family.

Its subcellular location is the membrane. Functionally, high-affinity transporter for external inorganic phosphate. This is Probable inorganic phosphate transporter 1-4 (PHT1-4) from Oryza sativa subsp. indica (Rice).